A 419-amino-acid chain; its full sequence is Equilibrative nucleotide transporter 5 (419 aa).

Helical transmembrane passes span 20 to 40 (MVVCCILGIGSLVSWNSLLSV), 56 to 76 (VLTFVYQPFSIGTIVIFAYNE), 86 to 106 (LIGYIVFTTSIFLLIILDLAT), 108 to 128 (GHGGIGPYIVLCAIVGSFGFA), 142 to 162 (LMCPELIQSFVAGLAVAGALT), 186 to 206 (IFLAISTLVEFLCVLLYAYVF), 265 to 285 (YVVNLFLIYVLTLSILPGFLY), 292 to 312 (GLGSWYALVLIAMYNWWDLVG), 327 to 347 (KGLTVAVLTRFLLVPAFYFTA), 354 to 374 (WMILLVSILGLTNGHLTVCIL), and 393 to 413 (LVLFILWGAFVGCALGWLWLI).

It belongs to the SLC29A/ENT transporter (TC 2.A.57) family.

It localises to the cell membrane. May be involved in nucleoside transport. The polypeptide is Equilibrative nucleotide transporter 5 (ENT5) (Arabidopsis thaliana (Mouse-ear cress)).